Consider the following 348-residue polypeptide: Gamma-glutamyl hydrolase 1 (348 aa).

An N-terminal signal peptide occupies residues 1 to 23; sequence MIDNNCLYKEELNRNSYSGLAKE. Residues 46-342 form the Gamma-glutamyl hydrolase domain; that stretch reads SPDPNLNYRP…RGYDEVYIFT (297 aa). Cysteine 156 acts as the Nucleophile in catalysis. The active site involves histidine 269.

It belongs to the peptidase C26 family. Highly expressed in roots and at lower levels in leaves, stems and siliques.

The protein resides in the vacuole. Its subcellular location is the secreted. The protein localises to the extracellular space. It is found in the cell wall. It carries out the reaction (6S)-5,6,7,8-tetrahydrofolyl-(gamma-L-Glu)(n) + (n-1) H2O = (6S)-5,6,7,8-tetrahydrofolate + (n-1) L-glutamate. Functionally, cleaves the polyglutamate sidechains of folate polyglutamates in the vacuole. Is important for polyglutamyl tail length determination before vacuolar exit. Plays a role in folate stability and intracellular folate content. The polypeptide is Gamma-glutamyl hydrolase 1 (GGH1) (Arabidopsis thaliana (Mouse-ear cress)).